Here is a 98-residue protein sequence, read N- to C-terminus: UPF0390 protein zgc136864 (98 aa).

A compositionally biased stretch (basic residues) spans 1-30 (MAQGKQKFKAQRPGGAKKHQNKPKGLKKGG). Disordered stretches follow at residues 1–38 (MAQGKQKFKAQRPGGAKKHQNKPKGLKKGGRIIAPKKA) and 63–98 (TQKASTSLHKKLSVLKTPAQKSGTAGAPKPAAGPSK). Over residues 83 to 98 (KSGTAGAPKPAAGPSK) the composition is skewed to low complexity.

It belongs to the UPF0390 family.

In Danio rerio (Zebrafish), this protein is UPF0390 protein zgc136864.